We begin with the raw amino-acid sequence, 101 residues long: Cyanovirin-N (101 aa).

Cystine bridges form between Cys8–Cys22 and Cys58–Cys73.

Belongs to the cyanovirin-N family. In terms of assembly, in solution exists as a metastable domain-swapped homodimer which very slowly converts into a more stable monomeric form at room temperature. Under physiological conditions it is unlikely that the dimeric species exists and indeed the monomer is more active against HIV. Interacts with HIV-1 gp120. In terms of processing, cleavage, or reduction and alkylation of the disulfide bonds results in the loss of anti-HIV activity.

In terms of biological role, mannose-binding lectin. This is Cyanovirin-N from Nostoc ellipsosporum.